An 86-amino-acid polypeptide reads, in one-letter code: Large ribosomal subunit protein uL23 (86 aa).

The protein belongs to the universal ribosomal protein uL23 family. As to quaternary structure, part of the 50S ribosomal subunit. Contacts protein L29.

Its function is as follows. Binds to 23S rRNA. One of the proteins that surrounds the polypeptide exit tunnel on the outside of the ribosome. This is Large ribosomal subunit protein uL23 from Thermococcus onnurineus (strain NA1).